The sequence spans 367 residues: HTH-type transcriptional regulator GbdR (367 aa).

An HTH araC/xylS-type domain is found at 227–325 (QEIVALMEAN…GIPPRDERQG (99 aa)). DNA-binding regions (H-T-H motif) lie at residues 244–265 (DELA…QKYL) and 292–315 (IIEV…REYF).

Functionally, specific regulator of choline metabolism, which activates transcription of at least 25 genes from 11 promoters in response to choline metabolites. Required for the induction of plcH, encoding the phospholipase C, and pchP, encoding the phosphorylcholine phosphatase, in response to glycine betaine (GB) and dimethylglycine (DMG). Also controls the expression of gbcAB and dgcAB, which are required for GB and DMG degradation, respectively, in response to both GB and DMG. The GbdR regulon also includes genes encoding sarcosine, glycine and serine catabolic enzymes, the BetX and CbcXWV quaternary amine transport proteins and the acetylcholine esterase gene, choE. Acts by binding directly to the promoter region of the genes. May play an important role during P.aeruginosa interactions with eukaryotes. This is HTH-type transcriptional regulator GbdR from Pseudomonas aeruginosa (strain UCBPP-PA14).